The sequence spans 165 residues: UPF0303 protein Bamb_1459 (165 aa).

The protein belongs to the UPF0303 family.

This Burkholderia ambifaria (strain ATCC BAA-244 / DSM 16087 / CCUG 44356 / LMG 19182 / AMMD) (Burkholderia cepacia (strain AMMD)) protein is UPF0303 protein Bamb_1459.